The following is a 354-amino-acid chain: Guanine nucleotide-binding protein G(i) subunit alpha-1 (354 aa).

Gly2 is lipidated: N-myristoyl glycine. Cys3 is lipidated: S-palmitoyl cysteine. The G-alpha domain maps to 32 to 354 (REVKLLLLGA…KNNLKDCGLF (323 aa)). The tract at residues 35 to 48 (KLLLLGAGESGKST) is G1 motif. GTP is bound by residues 43-48 (ESGKST), 150-151 (DS), and 175-178 (LRTR). Ser47 contributes to the Mg(2+) binding site. The G2 motif stretch occupies residues 173–181 (DVLRTRVKT). Thr181 contacts Mg(2+). Positions 196 to 205 (FKMFDVGGQR) are G3 motif. GTP is bound by residues 200–204 (DVGGQ), 269–272 (NKKD), and Ala326. The tract at residues 265-272 (ILFLNKKD) is G4 motif. Residues 324–329 (TCATDT) form a G5 motif region.

It belongs to the G-alpha family. G(i/o/t/z) subfamily. In terms of assembly, heterotrimeric G proteins are composed of 3 units; alpha, beta and gamma. The alpha chain contains the guanine nucleotide binding site. Part of a spindle orientation complex at least composed of GNAI1, GPSM2 and NUMA1. Identified in complex with the beta subunit GNB1 and the gamma subunit GNG1. Identified in complex with the beta subunit GNB1 and the gamma subunit GNG2. Component of the TAS2R14-GNAI1 complex, consisting of TAS2R14, GNAI1, GNB1 and GNG2; within the complex interacts with TAS2R14; this complex plays a role in the perception of bitterness. GTP binding causes dissociation of the heterotrimer, liberating the individual subunits so that they can interact with downstream effector proteins. Interacts (GDP-bound form) with GPSM1; this inhibits guanine nucleotide exchange and GTP binding. Interacts (GDP-bound form) with GPSM2 (via GoLoco domains); this inhibits guanine nucleotide exchange. Interacts with RGS10; this strongly enhances GTP hydrolysis. Interacts with RGS1 and RGS16. Interacts with RGS4. Interacts with RGS12. Interacts (via active GTP- or inactive GDP-bound forms) with RGS14 (via RGS and GoLoco domains). Interacts with RGS3, RGS6, RGS7, RGS8, RGS17, RGS18 and RGS20 (in vitro). Interacts (GDP-bound form) with RIC8A (via C-terminus); promoting GNAI1 folding and association with the plasma membrane. Interacts (inactive GDP-bound form) with NUCB1 (via GBA motif); the interaction leads to activation of GNAI1. Interacts (inactive GDP-bound form) with CCDC88C/DAPLE (via GBA motif); the interaction leads to activation of GNAI1. Interacts (inactive GDP-bound form) with CCDC8A/GIV (via GBA motif). Interacts with GPR15. Post-translationally, myristoylation at Gly-2 is required for membrane anchoring before palmitoylation. Palmitoylation at Cys-3 varies with membrane lipid composition.

It is found in the nucleus. The protein resides in the cytoplasm. The protein localises to the cell membrane. Its subcellular location is the cytoskeleton. It localises to the microtubule organizing center. It is found in the centrosome. The protein resides in the cell cortex. The protein localises to the membrane. It carries out the reaction GTP + H2O = GDP + phosphate + H(+). Its function is as follows. Guanine nucleotide-binding proteins (G proteins) function as transducers downstream of G protein-coupled receptors (GPCRs) in numerous signaling cascades. The alpha chain contains the guanine nucleotide binding site and alternates between an active, GTP-bound state and an inactive, GDP-bound state. Signaling by an activated GPCR promotes GDP release and GTP binding. The alpha subunit has a low GTPase activity that converts bound GTP to GDP, thereby terminating the signal. Both GDP release and GTP hydrolysis are modulated by numerous regulatory proteins. Signaling is mediated via effector proteins, such as adenylate cyclase. Inhibits adenylate cyclase activity of ADCY1, ADCY5 and ADCY6, leading to decreased intracellular cAMP levels. The inactive GDP-bound form prevents the association of RGS14 with centrosomes and is required for the translocation of RGS14 from the cytoplasm to the plasma membrane. Required for normal cytokinesis during mitosis. Required for cortical dynein-dynactin complex recruitment during metaphase. The chain is Guanine nucleotide-binding protein G(i) subunit alpha-1 (Gnai1) from Rattus norvegicus (Rat).